A 601-amino-acid chain; its full sequence is Elongation factor 4 (601 aa).

Residues 7 to 189 (DNIRNFSIVA…AIVKRLPAPK (183 aa)) enclose the tr-type G domain. Residues 19 to 24 (DHGKST) and 136 to 139 (NKVD) each bind GTP.

Belongs to the TRAFAC class translation factor GTPase superfamily. Classic translation factor GTPase family. LepA subfamily.

It is found in the cell inner membrane. It catalyses the reaction GTP + H2O = GDP + phosphate + H(+). Its function is as follows. Required for accurate and efficient protein synthesis under certain stress conditions. May act as a fidelity factor of the translation reaction, by catalyzing a one-codon backward translocation of tRNAs on improperly translocated ribosomes. Back-translocation proceeds from a post-translocation (POST) complex to a pre-translocation (PRE) complex, thus giving elongation factor G a second chance to translocate the tRNAs correctly. Binds to ribosomes in a GTP-dependent manner. The protein is Elongation factor 4 of Methylorubrum extorquens (strain CM4 / NCIMB 13688) (Methylobacterium extorquens).